Here is a 444-residue protein sequence, read N- to C-terminus: MSNTILQNLPEGQKVGIAFSGGLDTSAALLWMRQKGAVPYAYTANLGQPDEDDYNAIPKKAMAYGAENARLIDCRTQLAQEGIAAIQCGAFHISTGGVTYFNTTPLGRAVTGTMLVAAMKEDDVNIWGDGSTFKGNDIERFYRYGLLTNPNLKIYKPWLDDQFIDELGGRFEMSQFLIANGFDYKMSVEKAYSTDSNMLGATHEAKDLEDLSTGINIVKPIMGVAFWDESVEIKPEVVTVRFEEGVPVELNGKRFDDVVELFMEANRIGGRHGLGMSDQIENRIIEAKSRGIYEAPGMALFHIAYERLLTGIHNEDTIEQYRINGLRLGRLLYQGRWFDPQALMLRESSQRWVAKAITGEVKLELRRGNDYSILDTVSPNLTYEAERLSMEKVEDAPFDPIDRIGQLTMRNLDVTDTRNKLGVYSKAGLLTAGQDAVVPQLDKK.

Residues 18–26 and Ala-44 each bind ATP; that span reads AFSGGLDTS. An L-citrulline-binding site is contributed by Tyr-100. Gly-130 and Thr-132 together coordinate ATP. L-aspartate contacts are provided by Thr-132, Asn-136, and Asp-137. Asn-136 provides a ligand contact to L-citrulline. Asp-137 contributes to the ATP binding site. L-citrulline is bound by residues Arg-140 and Ser-193. An ATP-binding site is contributed by Asp-195. 3 residues coordinate L-citrulline: Thr-202, Glu-204, and Glu-281.

Belongs to the argininosuccinate synthase family. Type 2 subfamily. As to quaternary structure, homotetramer.

The protein resides in the cytoplasm. The enzyme catalyses L-citrulline + L-aspartate + ATP = 2-(N(omega)-L-arginino)succinate + AMP + diphosphate + H(+). It functions in the pathway amino-acid biosynthesis; L-arginine biosynthesis; L-arginine from L-ornithine and carbamoyl phosphate: step 2/3. The sequence is that of Argininosuccinate synthase from Actinobacillus succinogenes (strain ATCC 55618 / DSM 22257 / CCUG 43843 / 130Z).